The following is a 1163-amino-acid chain: Ankyrin repeat-containing protein F37A4.4 (1163 aa).

Residues 856 to 885 form an ANK repeat; that stretch reads YGNTALHVATRRGYQNLVEILIKHGADRSF. The region spanning 929-1025 is the BRCT domain; it reads LCVPEKFPVS…KLIEKDCDYL (97 aa).

This chain is Ankyrin repeat-containing protein F37A4.4, found in Caenorhabditis elegans.